Here is a 339-residue protein sequence, read N- to C-terminus: Ketol-acid reductoisomerase (NADP(+)) (339 aa).

In terms of domain architecture, KARI N-terminal Rossmann spans M1–T182. NADP(+) is bound by residues Y24 to Q27, R48, S51, T53, and D83 to Q86. H108 is an active-site residue. G134 serves as a coordination point for NADP(+). The 146-residue stretch at T183 to I328 folds into the KARI C-terminal knotted domain. Residues D191, E195, E227, and E231 each coordinate Mg(2+). Position 252 (S252) interacts with substrate.

The protein belongs to the ketol-acid reductoisomerase family. It depends on Mg(2+) as a cofactor.

It carries out the reaction (2R)-2,3-dihydroxy-3-methylbutanoate + NADP(+) = (2S)-2-acetolactate + NADPH + H(+). It catalyses the reaction (2R,3R)-2,3-dihydroxy-3-methylpentanoate + NADP(+) = (S)-2-ethyl-2-hydroxy-3-oxobutanoate + NADPH + H(+). Its pathway is amino-acid biosynthesis; L-isoleucine biosynthesis; L-isoleucine from 2-oxobutanoate: step 2/4. The protein operates within amino-acid biosynthesis; L-valine biosynthesis; L-valine from pyruvate: step 2/4. Involved in the biosynthesis of branched-chain amino acids (BCAA). Catalyzes an alkyl-migration followed by a ketol-acid reduction of (S)-2-acetolactate (S2AL) to yield (R)-2,3-dihydroxy-isovalerate. In the isomerase reaction, S2AL is rearranged via a Mg-dependent methyl migration to produce 3-hydroxy-3-methyl-2-ketobutyrate (HMKB). In the reductase reaction, this 2-ketoacid undergoes a metal-dependent reduction by NADPH to yield (R)-2,3-dihydroxy-isovalerate. The sequence is that of Ketol-acid reductoisomerase (NADP(+)) from Methylorubrum extorquens (strain CM4 / NCIMB 13688) (Methylobacterium extorquens).